The sequence spans 456 residues: Phosphomethylpyrimidine synthase (456 aa).

Substrate is bound by residues asparagine 80, methionine 109, tyrosine 139, histidine 175, serine 195–glycine 197, aspartate 236–arginine 239, and glutamate 275. Position 279 (histidine 279) interacts with Zn(2+). Position 302 (tyrosine 302) interacts with substrate. Position 343 (histidine 343) interacts with Zn(2+). Cysteine 423, cysteine 426, and cysteine 431 together coordinate [4Fe-4S] cluster.

Belongs to the ThiC family. The cofactor is [4Fe-4S] cluster.

The catalysed reaction is 5-amino-1-(5-phospho-beta-D-ribosyl)imidazole + S-adenosyl-L-methionine = 4-amino-2-methyl-5-(phosphooxymethyl)pyrimidine + CO + 5'-deoxyadenosine + formate + L-methionine + 3 H(+). The protein operates within cofactor biosynthesis; thiamine diphosphate biosynthesis. Catalyzes the synthesis of the hydroxymethylpyrimidine phosphate (HMP-P) moiety of thiamine from aminoimidazole ribotide (AIR) in a radical S-adenosyl-L-methionine (SAM)-dependent reaction. The sequence is that of Phosphomethylpyrimidine synthase from Prochlorococcus marinus (strain MIT 9301).